The following is an 812-amino-acid chain: MLKNKSMKTSKLYVIKRDGRQEEVHFDKITSRIQKLCYNLNMDFVDPVTITLQVINGLYCGVTTQELDNLAAEIAAGLTCNHPDYAILAARIAVSNLHKETKKAFSDVFEDLYNHVNKETNQKVPLVSEFHYNVVKKNATRLNSSIIYDRDFGYNYFGFKTLERSYLLKRNGKIAERPQHMLMRVAIGIHGEDIDAAVETYNLLSERYFTHASPTLFAAATNRPQLSSCFLLTMTADSIEGIFKSVEQCAMISKSAGGIGLNVHCIRAKGTSICGTNGTSNGLVPMLRVFNNVARYVDQGGGKRPGAFAIYLEPWHSDVFEFLELKKNTGKEENRARDLFYALWIPDLFMKRVEANGDWSLMCPHKCPGLHDVWGDEFEKLYEKYEQEGRANRTVKAQSLWFAIIEAQVETGNPYMLFKDACNRKSNQQNVGTIKCSNLCTEIVEYSAPDEIAVCNLASIALNMFVTPEKTYDFKKLKEVTKIVTKNLNKIIDINYYPLPEARKSNLRHRPVGIGIQGFADALILMRFPYESEEAGLLNQQIFETIYYGALEASCELAQTEGPYETYEGSPVSKGILQYDMWDKVPTNLWDWQKLKESIRMHGVRNSLLVAPMPTASTAQIMGNNESFEPYTTNIYTRRVLSGEFQVVNHHLLRDLTELDLWDDDMKNQIISSRGSIQNIETIPPKVRDLYKTVWEISVKSTIKMAADRGAFIDQSQSFNIHVAEPNYGKLTSIHFYSWKAGLKTGMYYLRTKPAANAIQFTVNKKQGAVSMNGQNGTAEGSPQKYEEDRERKMADMVCSLENKDACMSCGS.

Residues leucine 12–lysine 103 enclose the ATP-cone domain. ATP-binding positions include lysine 16–arginine 17, glutamate 22–lysine 28, threonine 64, and aspartate 68. GDP-binding residues include serine 213 and serine 228. A disulfide bond links cysteine 229 and cysteine 455. DTTP contacts are provided by residues aspartate 237–isoleucine 239, lysine 254, arginine 267, and cysteine 274–glycine 275. Position 438 (asparagine 438) interacts with GDP. The Proton acceptor role is filled by asparagine 438. Cysteine 440 functions as the Cysteine radical intermediate in the catalytic mechanism. GDP contacts are provided by residues glutamate 442 and threonine 615 to threonine 618. Glutamate 442 serves as the catalytic Proton acceptor. Threonine 778 bears the Phosphothreonine mark. Serine 782 carries the phosphoserine modification. Tyrosine 786 bears the Phosphotyrosine mark.

The protein belongs to the ribonucleoside diphosphate reductase large chain family. Heterodimer of a large and a small subunit.

The enzyme catalyses a 2'-deoxyribonucleoside 5'-diphosphate + [thioredoxin]-disulfide + H2O = a ribonucleoside 5'-diphosphate + [thioredoxin]-dithiol. With respect to regulation, under complex allosteric control mediated by deoxynucleoside triphosphates and ATP binding to separate specificity and activation sites on the M1 subunit. The type of nucleotide bound at the specificity site determines substrate preference. It seems probable that ATP makes the enzyme reduce CDP and UDP, dGTP favors ADP reduction and dTTP favors GDP reduction. Stimulated by ATP and inhibited by dATP binding to the activity site. Its function is as follows. Provides the precursors necessary for DNA synthesis. Catalyzes the biosynthesis of deoxyribonucleotides from the corresponding ribonucleotides. This is Ribonucleoside-diphosphate reductase large subunit (RnrL) from Drosophila melanogaster (Fruit fly).